A 155-amino-acid chain; its full sequence is Ribosomal RNA large subunit methyltransferase H (155 aa).

S-adenosyl-L-methionine-binding positions include Leu72, Gly103, and 122–127 (LSPLTL).

Belongs to the RNA methyltransferase RlmH family. As to quaternary structure, homodimer.

Its subcellular location is the cytoplasm. The catalysed reaction is pseudouridine(1915) in 23S rRNA + S-adenosyl-L-methionine = N(3)-methylpseudouridine(1915) in 23S rRNA + S-adenosyl-L-homocysteine + H(+). Its function is as follows. Specifically methylates the pseudouridine at position 1915 (m3Psi1915) in 23S rRNA. This Histophilus somni (strain 129Pt) (Haemophilus somnus) protein is Ribosomal RNA large subunit methyltransferase H.